The sequence spans 227 residues: Homeobox protein HD-10 (227 aa).

The segment at residues 30–89 (FVKHRKRTTKAQLKVLEETFETNIRPDANMRKKLGEQLGMTPRSVQVWFQNRRAKIKKLT) is a DNA-binding region (homeobox). A disordered region spans residues 88-115 (LTQKKMMQQENTDNTKGPDAAHGSSSPK). A compositionally biased stretch (polar residues) spans 92–102 (KMMQQENTDNT).

It is found in the nucleus. The polypeptide is Homeobox protein HD-10 (HD-10) (Encephalitozoon cuniculi (strain GB-M1) (Microsporidian parasite)).